A 448-amino-acid chain; its full sequence is Argininosuccinate synthase (448 aa).

Residues 17-25 and Ala43 each bind ATP; that span reads AFSGGLDTS. Tyr99 is a binding site for L-citrulline. Residues Gly129 and Thr131 each contribute to the ATP site. Residues Thr131, Asn135, and Asp136 each coordinate L-aspartate. Asn135 is an L-citrulline binding site. Asp136 serves as a coordination point for ATP. 2 residues coordinate L-citrulline: Arg139 and Ser192. Asp194 contacts ATP. Positions 201, 203, and 280 each coordinate L-citrulline.

The protein belongs to the argininosuccinate synthase family. Type 2 subfamily. Homotetramer.

It localises to the cytoplasm. The enzyme catalyses L-citrulline + L-aspartate + ATP = 2-(N(omega)-L-arginino)succinate + AMP + diphosphate + H(+). It functions in the pathway amino-acid biosynthesis; L-arginine biosynthesis; L-arginine from L-ornithine and carbamoyl phosphate: step 2/3. The sequence is that of Argininosuccinate synthase from Bradyrhizobium sp. (strain ORS 278).